A 461-amino-acid chain; its full sequence is Coronin-1A (461 aa).

An N-acetylserine modification is found at S2. S2 is subject to Phosphoserine; by PKC. WD repeat units follow at residues 13–63, 73–110, 123–160, 164–204, 207–251, 258–296, and 302–349; these read HVFG…LVLP, NAPT…MVWE, PVVT…MVWD, GAAM…RIIE, KGTV…ALWD, PLSL…RYFE, and PFLH…EPIA. Residues 403 to 418 show a composition bias toward basic and acidic residues; it reads ELRVNRGLDTGRRRAA. The disordered stretch occupies residues 403-432; that stretch reads ELRVNRGLDTGRRRAAPEASGTPSSDAVSR. T412 is subject to Phosphothreonine; by PKC. S422 carries the phosphoserine modification. A coiled-coil region spans residues 424-460; the sequence is TPSSDAVSRLEEEMRKLQATVQELQKRLDRLEETVQA. N6-acetyllysine is present on K449.

Belongs to the WD repeat coronin family. Binds actin. In terms of processing, phosphorylation at Thr-412 by PKC strongly down-regulates the association with actin. Polyubiquitinated by RNF128 with 'Lys-48'-linked chains, leading to proteasomal degradation. As to expression, expressed in brain, thymus, spleen, bone marrow and lymph node. Low in lung and gut.

It localises to the cytoplasm. The protein resides in the cytoskeleton. It is found in the cell cortex. Its subcellular location is the cytoplasmic vesicle. The protein localises to the phagosome membrane. In terms of biological role, may be a crucial component of the cytoskeleton of highly motile cells, functioning both in the invagination of large pieces of plasma membrane, as well as in forming protrusions of the plasma membrane involved in cell locomotion. In mycobacteria-infected cells, its retention on the phagosomal membrane prevents fusion between phagosomes and lysosomes. The chain is Coronin-1A (CORO1A) from Homo sapiens (Human).